Consider the following 252-residue polypeptide: Probable transcriptional regulatory protein RF_0799 (252 aa).

The interval 1-21 (MAGHSKFKNIQHRKGAQDKKR) is disordered.

Belongs to the TACO1 family.

It localises to the cytoplasm. The sequence is that of Probable transcriptional regulatory protein RF_0799 from Rickettsia felis (strain ATCC VR-1525 / URRWXCal2) (Rickettsia azadi).